The chain runs to 488 residues: Transcriptional coactivator YAP1 (488 aa).

A compositionally biased stretch (pro residues) spans 1–21 (MEPAQQPPPQPAPQGPAPPSV). Positions 1-47 (MEPAQQPPPQPAPQGPAPPSVSPAGTPAAPPAPPAGHQVVHVRGDSE) are disordered. The residue at position 46 (Ser46) is a Phosphoserine. Position 48 is a phosphothreonine (Thr48). A coiled-coil region spans residues 71 to 85 (MRLRKLPDSFFKPPE). The residue at position 75 (Lys75) is an N6-lactoyllysine. The segment at 76-99 (LPDSFFKPPEPKSHSRQASTDAGT) is disordered. Phosphoserine is present on residues Ser90 and Ser94. At Thr95 the chain carries Phosphothreonine. Residue Thr104 is modified to Phosphothreonine; by MAPK8 and MAPK9. Residues Ser112, Ser113, Ser116, and Ser123 each carry the phosphoserine modification. Ser149 carries the phosphoserine; by LATS1 and LATS2 modification. WW domains follow at residues 156-189 (VPLPAGWEMAKTSSGQRYFLNHNDQTTTWQDPRK) and 215-248 (GPLPDGWEQAMTQDGEVYYINHKNKTTSWLDPRL). Disordered regions lie at residues 261 to 293 (SAPVKQPPPLAPQSPQGGVLGGGSSNQQQQIQL) and 339 to 393 (TLEQ…SSYS). Residue Ser274 is modified to Phosphoserine. Positions 276 to 488 (QGGVLGGGSS…LDKESFLTWL (213 aa)) are transactivation domain. A coiled-coil region spans residues 283-344 (GSSNQQQQIQ…SQLPTLEQDG (62 aa)). The segment covering 348–376 (NAVSSPGMSQELRTMTTNSSDPFLNSGTY) has biased composition (polar residues). Ser352 carries the post-translational modification Phosphoserine; by MAPK8 and MAPK9. A phosphoserine mark is found at Ser356, Ser366, Ser367, and Ser373. A Phosphoserine; by LATS1 and LATS2 modification is found at Ser382. Residues 384–393 (DSGLSMSSYS) show a composition bias toward polar residues. 2 positions are modified to phosphoserine; by CK1: Ser385 and Ser388. Position 392 is a phosphotyrosine; by ABL1 (Tyr392). Thr397 carries the post-translational modification Phosphothreonine; by MAPK8 and MAPK9.

Belongs to the YAP1 family. In terms of assembly, part of a complex when phosphorylated that contains DSG3, PKP1, YAP1 and YWHAG; the complex is required for localization of DSG3 and YAP1 to the cell membrane in keratinocytes. Binds to the SH3 domain of the YES kinase. Binds to WBP1 and WBP2. Binds, in vitro, through the WW1 domain, to neural isoforms of ENAH that contain the PPSY motif. The phosphorylated form interacts with YWHAB. Interacts (via WW domains) with LATS1 (via PPxY motif 2). Interacts with LATS2. Interacts (via WW domain 1) with isoform JM-A of ERBB4 (via PPxY motif 2). Interacts with TEAD1, TEAD2 and TEAD3. Interacts with TP73 and HCK. Interacts with RUNX1. Interacts with TEAD4. Interacts (via WW domains) with PTPN14 (via PPxY motif 2); this interaction leads to the cytoplasmic sequestration of YAP1 and inhibits its transcriptional coactivator activity. Interacts (when phosphorylated at Ser-112) with SMAD2, SMAD3 and WWTR1. Interacts with PRRG2 (via cytoplasmic domain). Interacts (via WW domains) with PRRG4 (via cytoplasmic domain). Interacts (phosphorylated) with CLDN18; the interaction sequesters YAP1 away from the nucleus and thereby restricts transcription of YAP1 target genes. Interacts with SMAD1. Interacts with AMOT; the interaction facilitates translocation of YAP1 to the cytoplasm and tight junctions. Interacts with AMOTL2, the interaction is required for ubiquitination of AMOTL2 and localization of YAP1 to tight junctions. Post-translationally, phosphorylated by LATS1 and LATS2; leading to cytoplasmic translocation and inactivation. Phosphorylated by ABL1; leading to YAP1 stabilization, enhanced interaction with TP73 and recruitment onto proapoptotic genes; in response to DNA damage. Phosphorylation at Ser-385 and Ser-388 by CK1 is triggered by previous phosphorylation at Ser-382 by LATS proteins and leads to YAP1 ubiquitination by SCF(beta-TRCP) E3 ubiquitin ligase and subsequent degradation. Phosphorylated at Thr-104, Ser-123, Ser-352 and Thr-397 by MAPK8/JNK1 and MAPK9/JNK2, which is required for the regulation of apoptosis by YAP1. Lactylation by AARS1 promotes nuclear localization and stabilization of YAP1, leading to increased Hippo signaling pathway. Delactylated by SIRT1. In terms of processing, ubiquitinated by SCF(beta-TRCP) E3 ubiquitin ligase. Isoforms lacking the transactivation domain seen in striatal neurons (at protein level). Ubiquitous. Isoform 2 is expressed at higher levels in the neural tissues. In the embryo, it is expressed in brain, eye, and the maxillary and frontonasal components of the primary palate.

It is found in the cytoplasm. It localises to the nucleus. The protein localises to the cell junction. Its subcellular location is the tight junction. The protein resides in the cell membrane. Transcriptional regulator with dual roles as a coactivator and corepressor. Critical downstream regulatory target in the Hippo signaling pathway, crucial for organ size control and tumor suppression by restricting proliferation and promoting apoptosis. The Hippo signaling pathway core involves a kinase cascade featuring STK3/MST2 and STK4/MST1, along with its regulatory partner SAV1, which phosphorylates and activates LATS1/2 in complex with their regulatory protein, MOB1. This activation leads to the phosphorylation and inactivation of the YAP1 oncoprotein and WWTR1/TAZ. Phosphorylation of YAP1 by LATS1/2 prevents its nuclear translocation, thereby regulating the expression of its target genes. The transcriptional regulation of gene expression requires TEAD transcription factors and modulates cell growth, anchorage-independent growth, and induction of epithelial-mesenchymal transition (EMT). Plays a key role in tissue tension and 3D tissue shape by regulating the cortical actomyosin network, acting via ARHGAP18, a Rho GTPase activating protein that suppresses F-actin polymerization. It also suppresses ciliogenesis by acting as a transcriptional corepressor of TEAD4 target genes AURKA and PLK1. In conjunction with WWTR1, regulates TGFB1-dependent SMAD2 and SMAD3 nuclear accumulation. Synergizes with WBP2 to enhance PGR activity. The sequence is that of Transcriptional coactivator YAP1 (Yap1) from Mus musculus (Mouse).